Consider the following 241-residue polypeptide: Small ribosomal subunit protein uS2 (241 aa).

Belongs to the universal ribosomal protein uS2 family.

The chain is Small ribosomal subunit protein uS2 from Shigella flexneri serotype 5b (strain 8401).